We begin with the raw amino-acid sequence, 606 residues long: V-type proton ATPase catalytic subunit A (606 aa).

Alanine 2 is subject to N-acetylalanine. Alanine 240 to valine 247 serves as a coordination point for ATP.

This sequence belongs to the ATPase alpha/beta chains family. As to quaternary structure, V-ATPase is a heteromultimeric enzyme made up of two complexes: the ATP-hydrolytic V1 complex and the proton translocation V0 complex. The V1 complex consists of three catalytic AB heterodimers that form a heterohexamer, three peripheral stalks each consisting of EG heterodimers, one central rotor including subunits D and F, and the regulatory subunits C and H. The proton translocation complex V0 consists of the proton transport subunit a, a ring of proteolipid subunits c9c'', rotary subunit d, subunits e and f, and the accessory subunits vah-19/Ac45 and vah-20/PRR. In terms of tissue distribution, expressed in proximal but not distal germ cells.

It carries out the reaction ATP + H2O + 4 H(+)(in) = ADP + phosphate + 5 H(+)(out). Its activity is regulated as follows. ATP hydrolysis occurs at the interface between the nucleotide-binding domains of subunits A and B. ATP hydrolysis triggers a conformational change in the subunits D and F, which induces a shift of subunit d. The c-ring is subsequently rotated and results in a continuous proton translocation across the membrane. Catalytic subunit of the V1 complex of vacuolar(H+)-ATPase (V-ATPase), a multisubunit enzyme composed of a peripheral complex (V1) that hydrolyzes ATP and a membrane integral complex (V0) that translocates protons. V-ATPase is responsible for acidifying and maintaining the pH of intracellular compartments and in some cell types, is targeted to the plasma membrane, where it is responsible for acidifying the extracellular environment. Required along with other vacuolar ATPase components for the removal of protein aggregates which form in immature oocytes in the distal gonad. This removal occurs as the oocytes mature and move to the proximal gonad, is triggered by the introduction of sperm through mating and occurs before fertilization. The introduction of sperm triggers V-ATPase accumulation in proximal oocytes and induces lysosomal acidification which leads to engulfing of protein aggregates by lysosomes and subsequent clearance of the aggregates. Lysosomal acidification also leads to changes in mitochondrial morphology and function. Mitochondria in distal immature oocytes are fragmented, produce high levels of reactive oxygen species (ROS) and have high membrane potential, indicative of metabolic inactivity. In contrast, mitochondria in proximal mature oocytes are tubular with lower ROS levels and membrane potential, indicative of an active metabolic state required for aggregate mobilization before clearance. Involved in receptor-mediated endocytosis. This Caenorhabditis elegans protein is V-type proton ATPase catalytic subunit A.